Reading from the N-terminus, the 545-residue chain is Glucose-6-phosphate isomerase (545 aa).

Glu351 serves as the catalytic Proton donor. Residues His382 and Lys510 contribute to the active site.

It belongs to the GPI family.

It localises to the cytoplasm. It carries out the reaction alpha-D-glucose 6-phosphate = beta-D-fructose 6-phosphate. It participates in carbohydrate biosynthesis; gluconeogenesis. Its pathway is carbohydrate degradation; glycolysis; D-glyceraldehyde 3-phosphate and glycerone phosphate from D-glucose: step 2/4. Catalyzes the reversible isomerization of glucose-6-phosphate to fructose-6-phosphate. This chain is Glucose-6-phosphate isomerase, found in Shewanella baltica (strain OS185).